Reading from the N-terminus, the 306-residue chain is ATP synthase gamma chain (306 aa).

The protein belongs to the ATPase gamma chain family. F-type ATPases have 2 components, CF(1) - the catalytic core - and CF(0) - the membrane proton channel. CF(1) has five subunits: alpha(3), beta(3), gamma(1), delta(1), epsilon(1). CF(0) has three main subunits: a, b and c.

It is found in the cell membrane. Functionally, produces ATP from ADP in the presence of a proton gradient across the membrane. The gamma chain is believed to be important in regulating ATPase activity and the flow of protons through the CF(0) complex. This Bifidobacterium animalis subsp. lactis (strain AD011) protein is ATP synthase gamma chain.